The chain runs to 358 residues: Peptide chain release factor 1 (358 aa).

At Q233 the chain carries N5-methylglutamine.

This sequence belongs to the prokaryotic/mitochondrial release factor family. Methylated by PrmC. Methylation increases the termination efficiency of RF1.

Its subcellular location is the cytoplasm. Its function is as follows. Peptide chain release factor 1 directs the termination of translation in response to the peptide chain termination codons UAG and UAA. The chain is Peptide chain release factor 1 from Agathobacter rectalis (strain ATCC 33656 / DSM 3377 / JCM 17463 / KCTC 5835 / VPI 0990) (Eubacterium rectale).